The primary structure comprises 624 residues: Protein FAM234B (624 aa).

Positions 1–91 (MATVLSRALK…GFPSEPLGGL (91 aa)) are disordered. Ser16 carries the phosphoserine modification. Thr26 is modified (phosphothreonine). A phosphoserine mark is found at Ser30, Ser33, and Ser63. The helical transmembrane segment at 107–127 (VFLLTLVISMVLVLLCAFLIP) threads the bilayer.

The protein belongs to the FAM234 family.

It localises to the membrane. Its subcellular location is the golgi outpost. The protein localises to the cytoplasm. It is found in the cytoskeleton. The protein resides in the microtubule organizing center. This is Protein FAM234B from Mus musculus (Mouse).